Reading from the N-terminus, the 405-residue chain is L-rhamnonate dehydratase (405 aa).

Positions 33 and 59 each coordinate substrate. Residues aspartate 226, glutamate 252, and glutamate 280 each coordinate Mg(2+). Histidine 329 serves as the catalytic Proton acceptor. Glutamate 349 provides a ligand contact to substrate.

The protein belongs to the mandelate racemase/muconate lactonizing enzyme family. RhamD subfamily. Homooctamer; tetramer of dimers. Requires Mg(2+) as cofactor.

The enzyme catalyses L-rhamnonate = 2-dehydro-3-deoxy-L-rhamnonate + H2O. In terms of biological role, catalyzes the dehydration of L-rhamnonate to 2-keto-3-deoxy-L-rhamnonate (KDR). The polypeptide is L-rhamnonate dehydratase (Salmonella typhi).